A 198-amino-acid chain; its full sequence is FMN-dependent NADH:quinone oxidoreductase (198 aa).

Met-92–Leu-95 lines the FMN pocket.

Belongs to the azoreductase type 1 family. Homodimer. FMN serves as cofactor.

It carries out the reaction 2 a quinone + NADH + H(+) = 2 a 1,4-benzosemiquinone + NAD(+). It catalyses the reaction N,N-dimethyl-1,4-phenylenediamine + anthranilate + 2 NAD(+) = 2-(4-dimethylaminophenyl)diazenylbenzoate + 2 NADH + 2 H(+). Its function is as follows. Quinone reductase that provides resistance to thiol-specific stress caused by electrophilic quinones. Also exhibits azoreductase activity. Catalyzes the reductive cleavage of the azo bond in aromatic azo compounds to the corresponding amines. The chain is FMN-dependent NADH:quinone oxidoreductase from Lachnoclostridium phytofermentans (strain ATCC 700394 / DSM 18823 / ISDg) (Clostridium phytofermentans).